The chain runs to 198 residues: Protein GrpE (198 aa).

The segment at 1–58 is disordered; that stretch reads MTEKDQSVNNEEFAEKEDNTAKDSNTDEQIEKTASEDDVQNDSSAVDDKEKEIQQLKE. 2 stretches are compositionally biased toward basic and acidic residues: residues 16 to 35 and 46 to 58; these read KEDN…KTAS and VDDK…QLKE.

Belongs to the GrpE family. In terms of assembly, homodimer.

The protein resides in the cytoplasm. Functionally, participates actively in the response to hyperosmotic and heat shock by preventing the aggregation of stress-denatured proteins, in association with DnaK and GrpE. It is the nucleotide exchange factor for DnaK and may function as a thermosensor. Unfolded proteins bind initially to DnaJ; upon interaction with the DnaJ-bound protein, DnaK hydrolyzes its bound ATP, resulting in the formation of a stable complex. GrpE releases ADP from DnaK; ATP binding to DnaK triggers the release of the substrate protein, thus completing the reaction cycle. Several rounds of ATP-dependent interactions between DnaJ, DnaK and GrpE are required for fully efficient folding. The polypeptide is Protein GrpE (Staphylococcus carnosus (strain TM300)).